Here is a 338-residue protein sequence, read N- to C-terminus: Fructose-1,6-bisphosphatase 1 (338 aa).

The residue at position 2 (T2) is an N-acetylthreonine. AMP-binding positions include V18–G22 and T28–T32. Positions 69 and 98 each coordinate Mg(2+). K113–Y114 is an AMP binding site. Mg(2+) is bound by residues D119, L121, and D122. D122–S125 serves as a coordination point for substrate. R141 lines the AMP pocket. The residue at position 151 (K151) is an N6-succinyllysine. Residue S208 is modified to Phosphoserine; by PKA. Residues N213 to Y216, R244 to M249, Y265, and K275 to R277 contribute to the substrate site. A phosphotyrosine mark is found at Y216, Y245, and Y265. Mg(2+) is bound at residue E281.

The protein belongs to the FBPase class 1 family. In terms of assembly, homotetramer. Requires Mg(2+) as cofactor.

The enzyme catalyses beta-D-fructose 1,6-bisphosphate + H2O = beta-D-fructose 6-phosphate + phosphate. It functions in the pathway carbohydrate biosynthesis; gluconeogenesis. Subject to complex allosteric regulation. The enzyme can assume an active R-state, or an inactive T-state. Intermediate conformations may exist. AMP acts as an allosteric inhibitor. AMP binding affects the turnover of bound substrate and not the affinity for substrate. Fructose 2,6-bisphosphate acts as a competitive inhibitor. Fructose 2,6-bisphosphate and AMP have synergistic effects. In terms of biological role, catalyzes the hydrolysis of fructose 1,6-bisphosphate to fructose 6-phosphate in the presence of divalent cations, acting as a rate-limiting enzyme in gluconeogenesis. Plays a role in regulating glucose sensing and insulin secretion of pancreatic beta-cells. Appears to modulate glycerol gluconeogenesis in liver. Important regulator of appetite and adiposity; increased expression of the protein in liver after nutrient excess increases circulating satiety hormones and reduces appetite-stimulating neuropeptides and thus seems to provide a feedback mechanism to limit weight gain. The protein is Fructose-1,6-bisphosphatase 1 (FBP1) of Sus scrofa (Pig).